The chain runs to 1146 residues: ATP-dependent helicase/deoxyribonuclease subunit B (1146 aa).

The 280-residue stretch at Met-1 to Ser-280 folds into the UvrD-like helicase ATP-binding domain. Position 8–15 (Gly-8–Thr-15) interacts with ATP. Residues Leu-276 to Ser-584 form the UvrD-like helicase C-terminal domain. Positions 786, 1105, 1108, and 1114 each coordinate [4Fe-4S] cluster.

It belongs to the helicase family. AddB/RexB type 1 subfamily. As to quaternary structure, heterodimer of AddA and AddB. Mg(2+) is required as a cofactor. The cofactor is [4Fe-4S] cluster.

Functionally, the heterodimer acts as both an ATP-dependent DNA helicase and an ATP-dependent, dual-direction single-stranded exonuclease. Recognizes the chi site generating a DNA molecule suitable for the initiation of homologous recombination. The AddB subunit has 5' -&gt; 3' nuclease activity but not helicase activity. The chain is ATP-dependent helicase/deoxyribonuclease subunit B from Acetivibrio thermocellus (strain ATCC 27405 / DSM 1237 / JCM 9322 / NBRC 103400 / NCIMB 10682 / NRRL B-4536 / VPI 7372) (Clostridium thermocellum).